The sequence spans 414 residues: Probable 1-acylglycerol-3-phosphate O-acyltransferase (414 aa).

An AB hydrolase-1 domain is found at 117–382; that stretch reads PTLVMVHGYG…GGHFVFIDNP (266 aa). Residues 193-197 carry the GXSXG motif; the sequence is GHSFG. Positions 375–380 match the HXXXXD motif motif; sequence HFVFID.

It belongs to the peptidase S33 family. ABHD4/ABHD5 subfamily.

Its subcellular location is the cytoplasm. The catalysed reaction is a 1-acyl-sn-glycero-3-phosphate + an acyl-CoA = a 1,2-diacyl-sn-glycero-3-phosphate + CoA. Its function is as follows. Lysophosphatidic acid acyltransferase which functions in phosphatidic acid biosynthesis. May regulate neutral lipid accumulation and participate in the regulation of lipid turnover in vegetative cells. May possess additional triacylglycerol lipase and phospholipase A2 activities in vitro. This Oryza sativa subsp. japonica (Rice) protein is Probable 1-acylglycerol-3-phosphate O-acyltransferase.